We begin with the raw amino-acid sequence, 578 residues long: Membrane protein insertase YidC (578 aa).

A helical transmembrane segment spans residues 3 to 23 (IQRSILIVALAVVSYLLVLQW). Positions 34–72 (AASASMNTTQGLPDTPSASGTSSDVPTAQSSAAGSEAAD) are disordered. Positions 37–66 (ASMNTTQGLPDTPSASGTSSDVPTAQSSAA) are enriched in polar residues. 5 consecutive transmembrane segments (helical) span residues 361–381 (LELT…FWLL), 387–407 (LIGN…LAFF), 457–477 (LGGC…YWVL), 500–520 (PFFI…MLNP), and 535–555 (PIIF…YWVV).

It belongs to the OXA1/ALB3/YidC family. Type 1 subfamily. As to quaternary structure, interacts with the Sec translocase complex via SecD. Specifically interacts with transmembrane segments of nascent integral membrane proteins during membrane integration.

It localises to the cell inner membrane. Its function is as follows. Required for the insertion and/or proper folding and/or complex formation of integral membrane proteins into the membrane. Involved in integration of membrane proteins that insert both dependently and independently of the Sec translocase complex, as well as at least some lipoproteins. Aids folding of multispanning membrane proteins. In Pseudomonas aeruginosa (strain LESB58), this protein is Membrane protein insertase YidC.